The following is a 372-amino-acid chain: Homoserine dehydrogenase (372 aa).

Val-13, Gly-15, Val-16, and Thr-99 together coordinate NAD(+). Val-16 and Thr-99 together coordinate NADP(+). Residues Val-16, Thr-99, Ser-100, and Lys-123 each contribute to the NADPH site. An NADP(+)-binding site is contributed by Lys-123. Glu-150, Val-153, Ala-155, and Leu-157 together coordinate Na(+). NADP(+) is bound by residues Gly-216 and Glu-219. L-homoserine contacts are provided by Glu-219 and Asp-230. The active-site Proton donor is the Lys-234. Residue Gly-352 coordinates NAD(+). Gly-352 contacts NADP(+). Residue Gly-352 participates in NADPH binding.

This sequence belongs to the homoserine dehydrogenase family. As to quaternary structure, homodimer. A metal cation serves as cofactor.

It carries out the reaction L-homoserine + NADP(+) = L-aspartate 4-semialdehyde + NADPH + H(+). The enzyme catalyses L-homoserine + NAD(+) = L-aspartate 4-semialdehyde + NADH + H(+). It participates in amino-acid biosynthesis; L-methionine biosynthesis via de novo pathway; L-homoserine from L-aspartate: step 3/3. It functions in the pathway amino-acid biosynthesis; L-threonine biosynthesis; L-threonine from L-aspartate: step 3/5. In terms of biological role, catalyzes the conversion of L-aspartate-beta-semialdehyde (L-Asa) to L-homoserine (L-Hse), the third step in the biosynthesis of amino acids that derive from aspartate (the aspartate family of amino acids), including methioinine and threonine, the latter of which is a precursor to isoleucine; production of homoserine leads to a branch-point in the pathway as it can either be O-phosphorylated for processing to threonine, or O-acylated for processing to methionine. This chain is Homoserine dehydrogenase, found in Paracoccidioides brasiliensis (strain Pb18).